We begin with the raw amino-acid sequence, 233 residues long: Glucosamine-6-phosphate deaminase (233 aa).

Residue D62 is the Proton acceptor; for enolization step of the active site. The active-site For ring-opening step is N128. Residue H130 is the Proton acceptor; for ring-opening step of the active site. E135 acts as the For ring-opening step in catalysis.

Belongs to the glucosamine/galactosamine-6-phosphate isomerase family. NagB subfamily.

It catalyses the reaction alpha-D-glucosamine 6-phosphate + H2O = beta-D-fructose 6-phosphate + NH4(+). It functions in the pathway amino-sugar metabolism; N-acetylneuraminate degradation; D-fructose 6-phosphate from N-acetylneuraminate: step 5/5. Its function is as follows. Catalyzes the reversible isomerization-deamination of glucosamine 6-phosphate (GlcN6P) to form fructose 6-phosphate (Fru6P) and ammonium ion. The polypeptide is Glucosamine-6-phosphate deaminase (Leuconostoc citreum (strain KM20)).